Consider the following 485-residue polypeptide: Glutamyl-tRNA(Gln) amidotransferase subunit A (485 aa).

Residues lysine 79 and serine 154 each act as charge relay system in the active site. Residue serine 178 is the Acyl-ester intermediate of the active site.

The protein belongs to the amidase family. GatA subfamily. Heterotrimer of A, B and C subunits.

It carries out the reaction L-glutamyl-tRNA(Gln) + L-glutamine + ATP + H2O = L-glutaminyl-tRNA(Gln) + L-glutamate + ADP + phosphate + H(+). Functionally, allows the formation of correctly charged Gln-tRNA(Gln) through the transamidation of misacylated Glu-tRNA(Gln) in organisms which lack glutaminyl-tRNA synthetase. The reaction takes place in the presence of glutamine and ATP through an activated gamma-phospho-Glu-tRNA(Gln). This Desulforamulus reducens (strain ATCC BAA-1160 / DSM 100696 / MI-1) (Desulfotomaculum reducens) protein is Glutamyl-tRNA(Gln) amidotransferase subunit A.